Reading from the N-terminus, the 338-residue chain is Putative pectinesterase 63 (338 aa).

A signal peptide spans 1–24 (MGYNYVSLIVTILLVVITSPVVFG). Thr-116 and Gln-151 together coordinate substrate. Asp-174 functions as the Proton donor in the catalytic mechanism. The Nucleophile role is filled by Asp-195. Arg-252 serves as a coordination point for substrate.

It belongs to the pectinesterase family.

The protein resides in the secreted. Its subcellular location is the cell wall. It catalyses the reaction [(1-&gt;4)-alpha-D-galacturonosyl methyl ester](n) + n H2O = [(1-&gt;4)-alpha-D-galacturonosyl](n) + n methanol + n H(+). The protein operates within glycan metabolism; pectin degradation; 2-dehydro-3-deoxy-D-gluconate from pectin: step 1/5. In terms of biological role, acts in the modification of cell walls via demethylesterification of cell wall pectin. In Arabidopsis thaliana (Mouse-ear cress), this protein is Putative pectinesterase 63 (PME63).